A 241-amino-acid chain; its full sequence is Phosphoadenosine 5'-phosphosulfate reductase (241 aa).

The active-site Nucleophile; cysteine thiosulfonate intermediate is the Cys-235.

Belongs to the PAPS reductase family. CysH subfamily.

The protein localises to the cytoplasm. It catalyses the reaction [thioredoxin]-disulfide + sulfite + adenosine 3',5'-bisphosphate + 2 H(+) = [thioredoxin]-dithiol + 3'-phosphoadenylyl sulfate. Its pathway is sulfur metabolism; hydrogen sulfide biosynthesis; sulfite from sulfate: step 3/3. In terms of biological role, catalyzes the formation of sulfite from phosphoadenosine 5'-phosphosulfate (PAPS) using thioredoxin as an electron donor. The chain is Phosphoadenosine 5'-phosphosulfate reductase from Xanthomonas oryzae pv. oryzae (strain MAFF 311018).